Here is a 266-residue protein sequence, read N- to C-terminus: UPF0294 protein Ent638_0743 (266 aa).

Belongs to the UPF0294 family.

Its subcellular location is the cytoplasm. The chain is UPF0294 protein Ent638_0743 from Enterobacter sp. (strain 638).